Reading from the N-terminus, the 130-residue chain is Small ribosomal subunit protein uS11 (130 aa).

This sequence belongs to the universal ribosomal protein uS11 family. In terms of assembly, part of the 30S ribosomal subunit. Interacts with proteins S7 and S18. Binds to IF-3.

Functionally, located on the platform of the 30S subunit, it bridges several disparate RNA helices of the 16S rRNA. Forms part of the Shine-Dalgarno cleft in the 70S ribosome. The protein is Small ribosomal subunit protein uS11 of Campylobacter curvus (strain 525.92).